A 50-amino-acid chain; its full sequence is Large ribosomal subunit protein bL32c (50 aa).

The protein belongs to the bacterial ribosomal protein bL32 family.

Its subcellular location is the plastid. The protein resides in the chloroplast. This Lotus japonicus (Lotus corniculatus var. japonicus) protein is Large ribosomal subunit protein bL32c.